Consider the following 168-residue polypeptide: Cell division inhibitor SulA (168 aa).

A disordered region spans residues 1 to 20; the sequence is MSTQSVSSHNIESSSFSANQ. The ftsZ binding stretch occupies residues 105–111; that stretch reads ALLTGNY. Residues 161–168 form a lon protease binding region; it reads KIHSTLYH.

Belongs to the SulA family. In terms of assembly, interacts with FtsZ. Is rapidly cleaved and degraded by the Lon protease once DNA damage is repaired.

Functionally, component of the SOS system and an inhibitor of cell division. Accumulation of SulA causes rapid cessation of cell division and the appearance of long, non-septate filaments. In the presence of GTP, binds a polymerization-competent form of FtsZ in a 1:1 ratio, thus inhibiting FtsZ polymerization and therefore preventing it from participating in the assembly of the Z ring. This mechanism prevents the premature segregation of damaged DNA to daughter cells during cell division. In Pectobacterium atrosepticum (strain SCRI 1043 / ATCC BAA-672) (Erwinia carotovora subsp. atroseptica), this protein is Cell division inhibitor SulA.